The chain runs to 2223 residues: Protein Ycf2 (2223 aa).

Residue G1576–S1583 coordinates ATP.

The protein belongs to the Ycf2 family.

The protein localises to the plastid. It localises to the chloroplast stroma. Probable ATPase of unknown function. Its presence in a non-photosynthetic plant (Epifagus virginiana) and experiments in tobacco indicate that it has an essential function which is probably not related to photosynthesis. This Silene latifolia (White campion) protein is Protein Ycf2.